We begin with the raw amino-acid sequence, 155 residues long: Large ribosomal subunit protein eL24 (155 aa).

The segment covering 97–129 (KPEIRKAKRDEKAKADKEKKKADKAARKADKAK) has biased composition (basic and acidic residues). The tract at residues 97 to 155 (KPEIRKAKRDEKAKADKEKKKADKAARKADKAKSAATQASKISKQQAKGAFQKVAATSR) is disordered. A compositionally biased stretch (polar residues) spans 133–142 (TQASKISKQQ).

This sequence belongs to the eukaryotic ribosomal protein eL24 family.

This Eremothecium gossypii (strain ATCC 10895 / CBS 109.51 / FGSC 9923 / NRRL Y-1056) (Yeast) protein is Large ribosomal subunit protein eL24 (RPL24).